Here is a 337-residue protein sequence, read N- to C-terminus: Ribosomal RNA small subunit methyltransferase H (337 aa).

S-adenosyl-L-methionine contacts are provided by residues 36–38, Asp56, Phe82, Asp100, and Gln107; that span reads GGH. The tract at residues 317-337 is disordered; sequence RRSGRIPNPQSPIPASQGDAR.

Belongs to the methyltransferase superfamily. RsmH family.

The protein localises to the cytoplasm. It catalyses the reaction cytidine(1402) in 16S rRNA + S-adenosyl-L-methionine = N(4)-methylcytidine(1402) in 16S rRNA + S-adenosyl-L-homocysteine + H(+). Specifically methylates the N4 position of cytidine in position 1402 (C1402) of 16S rRNA. In Xanthomonas oryzae pv. oryzae (strain KACC10331 / KXO85), this protein is Ribosomal RNA small subunit methyltransferase H.